Consider the following 823-residue polypeptide: High affinity cAMP-specific and IBMX-insensitive 3',5'-cyclic phosphodiesterase 8A (823 aa).

The disordered stretch occupies residues 1-55; it reads MGCAPSIHTSENRTFSHSDGEDEDVDVDVPGPAPRSIQRWSTAPGLVEPQPRDNG. Residues 10–19 are compositionally biased toward basic and acidic residues; it reads SENRTFSHSD. One can recognise a PAS domain in the interval 209-280; it reads ACNSVFTALE…AINSCVTVDK (72 aa). The PAC domain occupies 283–325; sequence QGVYHTQKKNGDNIQQNVKIIPVIGQGGKIRHYVSIIRVCNGN. The disordered stretch occupies residues 338 to 373; that stretch reads DSQTDNQAGKHKDRRKHSMDAKAVSSRTSDVSSQRR. S355 is modified (phosphoserine; by PKA). Phosphoserine occurs at positions 382 and 452. Residue Y456 is modified to Phosphotyrosine. One can recognise a PDEase domain in the interval 475–814; sequence SLHDVPPRIA…RYWKGLDEKK (340 aa). H551 functions as the Proton donor in the catalytic mechanism. The a divalent metal cation site is built by H555, H591, D592, and D720.

It belongs to the cyclic nucleotide phosphodiesterase family. PDE8 subfamily. In terms of assembly, interacts with RAF1. The interaction promotes RAF1 activity. It depends on a divalent metal cation as a cofactor. Phosphorylated at Ser-355 by PKA under elevated cAMP conditions, this enhances catalytic activity. As to expression, expressed in multiple tissues, with highest levels in testis, followed by liver, heart, skeletal muscle, and kidney. In the testis, expressed specifically in the seminiferous tubules, in postmitotic pachytene spermatocytes. Low expression, if any, in lung, smooth muscle, pancreas, thyroid, thymus, submaxillary gland, spleen, prostate, epididymus, uterus.

The catalysed reaction is 3',5'-cyclic AMP + H2O = AMP + H(+). The protein operates within purine metabolism; 3',5'-cyclic AMP degradation; AMP from 3',5'-cyclic AMP: step 1/1. Its activity is regulated as follows. Inhibited by dipyridimole. Insensitive to selective PDE inhibitor rolipram and to the non-selective inhibitor, IBMX. In terms of biological role, hydrolyzes the second messenger cAMP, which is a key regulator of many important physiological processes. May be involved in maintaining basal levels of the cyclic nucleotide and/or in the cAMP regulation of germ cell development. Binding to RAF1 reduces RAF1 'Ser-259' inhibitory-phosphorylation and stimulates RAF1-dependent EGF-activated ERK-signaling. Protects against cell death induced by hydrogen peroxide and staurosporine. The chain is High affinity cAMP-specific and IBMX-insensitive 3',5'-cyclic phosphodiesterase 8A (Pde8a) from Mus musculus (Mouse).